We begin with the raw amino-acid sequence, 82 residues long: Exodeoxyribonuclease 7 small subunit (82 aa).

It belongs to the XseB family. As to quaternary structure, heterooligomer composed of large and small subunits.

Its subcellular location is the cytoplasm. It carries out the reaction Exonucleolytic cleavage in either 5'- to 3'- or 3'- to 5'-direction to yield nucleoside 5'-phosphates.. Bidirectionally degrades single-stranded DNA into large acid-insoluble oligonucleotides, which are then degraded further into small acid-soluble oligonucleotides. The sequence is that of Exodeoxyribonuclease 7 small subunit from Mannheimia succiniciproducens (strain KCTC 0769BP / MBEL55E).